We begin with the raw amino-acid sequence, 1320 residues long: Protein brunelleschi (1320 aa).

The segment at 313 to 411 is disordered; the sequence is HRNSSLQEAG…IPGHQRNGDL (99 aa). Positions 314-327 are enriched in polar residues; the sequence is RNSSLQEAGTSPLK. The residue at position 317 (Ser317) is a Phosphoserine. Residue Thr329 is modified to Phosphothreonine. Residues 329–340 show a composition bias toward basic and acidic residues; the sequence is TPEKWRASDATK. The span at 345–361 shows a compositional bias: polar residues; that stretch reads SDATANNVDSNQPQQRV. The span at 362-400 shows a compositional bias: low complexity; the sequence is TSNSSSCSSVSSLVTTATNSSASDTPTTSSSSTSTISAA. Ser672 is modified (phosphoserine). The interval 923-954 is disordered; the sequence is VSTSGHASLPSRVGSPHHRRNEPQNSSFRSTI. Over residues 945–954 the composition is skewed to polar residues; it reads PQNSSFRSTI.

It belongs to the NIBP family. May be part of the multisubunit TRAPP (transport protein particle) complex.

The protein resides in the cytoplasm. It localises to the golgi apparatus. Cooperates with Rab11 and fwd/PI4K to mediate the flow of membrane through the Golgi, which is required to support cleavage furrow ingression, therefore promoting cytokinesis in male meiotic cells. The protein is Protein brunelleschi of Drosophila melanogaster (Fruit fly).